Consider the following 408-residue polypeptide: Succinylornithine transaminase (408 aa).

The residue at position 252 (Lys-252) is an N6-(pyridoxal phosphate)lysine.

Belongs to the class-III pyridoxal-phosphate-dependent aminotransferase family. AstC subfamily. It depends on pyridoxal 5'-phosphate as a cofactor.

The catalysed reaction is N(2)-succinyl-L-ornithine + 2-oxoglutarate = N-succinyl-L-glutamate 5-semialdehyde + L-glutamate. The protein operates within amino-acid degradation; L-arginine degradation via AST pathway; L-glutamate and succinate from L-arginine: step 3/5. In terms of biological role, catalyzes the transamination of N(2)-succinylornithine and alpha-ketoglutarate into N(2)-succinylglutamate semialdehyde and glutamate. Can also act as an acetylornithine aminotransferase. This Salmonella agona (strain SL483) protein is Succinylornithine transaminase.